Here is a 533-residue protein sequence, read N- to C-terminus: CTP synthase (533 aa).

Positions 1-264 (MKYIFVTGGV…GKLVTEKLNL (264 aa)) are amidoligase domain. Ser12 contacts CTP. Ser12 provides a ligand contact to UTP. ATP-binding positions include 13 to 18 (SLGKGI) and Asp70. 2 residues coordinate Mg(2+): Asp70 and Glu138. CTP is bound by residues 145-147 (DIE), 185-190 (KTKPTQ), and Lys221. Residues 185-190 (KTKPTQ) and Lys221 contribute to the UTP site. 237–239 (KDA) is an ATP binding site. Residues 289 to 533 (TIGIVGKYIE…HGLVKASIEK (245 aa)) enclose the Glutamine amidotransferase type-1 domain. Gly357 is a binding site for L-glutamine. Cys384 functions as the Nucleophile; for glutamine hydrolysis in the catalytic mechanism. L-glutamine-binding positions include 385–388 (LGMQ), Glu407, and Arg464. Catalysis depends on residues His509 and Glu511.

Belongs to the CTP synthase family. As to quaternary structure, homotetramer.

It catalyses the reaction UTP + L-glutamine + ATP + H2O = CTP + L-glutamate + ADP + phosphate + 2 H(+). The catalysed reaction is L-glutamine + H2O = L-glutamate + NH4(+). The enzyme catalyses UTP + NH4(+) + ATP = CTP + ADP + phosphate + 2 H(+). It functions in the pathway pyrimidine metabolism; CTP biosynthesis via de novo pathway; CTP from UDP: step 2/2. Its activity is regulated as follows. Allosterically activated by GTP, when glutamine is the substrate; GTP has no effect on the reaction when ammonia is the substrate. The allosteric effector GTP functions by stabilizing the protein conformation that binds the tetrahedral intermediate(s) formed during glutamine hydrolysis. Inhibited by the product CTP, via allosteric rather than competitive inhibition. Catalyzes the ATP-dependent amination of UTP to CTP with either L-glutamine or ammonia as the source of nitrogen. Regulates intracellular CTP levels through interactions with the four ribonucleotide triphosphates. The polypeptide is CTP synthase (Methanococcus maripaludis (strain DSM 14266 / JCM 13030 / NBRC 101832 / S2 / LL)).